We begin with the raw amino-acid sequence, 556 residues long: Oxygen-dependent choline dehydrogenase (556 aa).

4 to 33 (DYIIIGAGSAGNVLATRLTEDPNTSVLLLE) is an FAD binding site. His-473 functions as the Proton acceptor in the catalytic mechanism.

This sequence belongs to the GMC oxidoreductase family. It depends on FAD as a cofactor.

The enzyme catalyses choline + A = betaine aldehyde + AH2. It carries out the reaction betaine aldehyde + NAD(+) + H2O = glycine betaine + NADH + 2 H(+). The protein operates within amine and polyamine biosynthesis; betaine biosynthesis via choline pathway; betaine aldehyde from choline (cytochrome c reductase route): step 1/1. Involved in the biosynthesis of the osmoprotectant glycine betaine. Catalyzes the oxidation of choline to betaine aldehyde and betaine aldehyde to glycine betaine at the same rate. The sequence is that of Oxygen-dependent choline dehydrogenase from Shigella flexneri serotype 5b (strain 8401).